Reading from the N-terminus, the 437-residue chain is MSESRSLAFPLRCVRDRQQAEAELQRLTRRTQTSQQKDVQGRVDVILKAVRERGDAAVCDFTERFDGFRPDPVAVPKHQLEQAWKALPENLRDALELAHRRISEFHQRQRPEDIRMEGAHGEQLGRRWRPVQRAGLYVPGGRAAYPSTVLMNAVPARVAGVEQVVICSPAGSNGQVNPVVLAAAHLAGVHTVMRIGGAQAIAAMAFGTESVPKVDVISGPGNIYVTLAKQAVYGQVGIDSLAGPSEVLVIADQSAQPEQVAADLLAQAEHDPLASSVLITTSHQLADGISSAIAQQLEDHPRREICEASLRDWGLVVVCDDLETCAQLSDSFAPEHLELLVERPEALADRIQHAGAIFLGPWSPEAVGDYLAGPNHTLPTCAAARFSGALSVETFMRHTSMIQFNRAALDATASAVCELAESEGLHSHAESVRKRLS.

Residues Y137, Q199, and N222 each contribute to the NAD(+) site. Residues S245, Q267, and H270 each contribute to the substrate site. Residues Q267 and H270 each contribute to the Zn(2+) site. Catalysis depends on proton acceptor residues E335 and H336. Substrate-binding residues include H336, D369, E423, and H428. D369 contributes to the Zn(2+) binding site. Zn(2+) is bound at residue H428.

The protein belongs to the histidinol dehydrogenase family. It depends on Zn(2+) as a cofactor.

It carries out the reaction L-histidinol + 2 NAD(+) + H2O = L-histidine + 2 NADH + 3 H(+). It functions in the pathway amino-acid biosynthesis; L-histidine biosynthesis; L-histidine from 5-phospho-alpha-D-ribose 1-diphosphate: step 9/9. Functionally, catalyzes the sequential NAD-dependent oxidations of L-histidinol to L-histidinaldehyde and then to L-histidine. The protein is Histidinol dehydrogenase of Parasynechococcus marenigrum (strain WH8102).